A 526-amino-acid chain; its full sequence is Glucose-6-phosphate isomerase (526 aa).

Glu320 (proton donor) is an active-site residue. Residues His349 and Lys453 contribute to the active site.

The protein belongs to the GPI family.

Its subcellular location is the cytoplasm. The catalysed reaction is alpha-D-glucose 6-phosphate = beta-D-fructose 6-phosphate. Its pathway is carbohydrate biosynthesis; gluconeogenesis. The protein operates within carbohydrate degradation; glycolysis; D-glyceraldehyde 3-phosphate and glycerone phosphate from D-glucose: step 2/4. Catalyzes the reversible isomerization of glucose-6-phosphate to fructose-6-phosphate. The protein is Glucose-6-phosphate isomerase of Rippkaea orientalis (strain PCC 8801 / RF-1) (Cyanothece sp. (strain PCC 8801)).